The following is a 564-amino-acid chain: Proline--tRNA ligase (564 aa).

The protein belongs to the class-II aminoacyl-tRNA synthetase family. ProS type 1 subfamily. As to quaternary structure, homodimer.

The protein localises to the cytoplasm. The catalysed reaction is tRNA(Pro) + L-proline + ATP = L-prolyl-tRNA(Pro) + AMP + diphosphate. Its function is as follows. Catalyzes the attachment of proline to tRNA(Pro) in a two-step reaction: proline is first activated by ATP to form Pro-AMP and then transferred to the acceptor end of tRNA(Pro). As ProRS can inadvertently accommodate and process non-cognate amino acids such as alanine and cysteine, to avoid such errors it has two additional distinct editing activities against alanine. One activity is designated as 'pretransfer' editing and involves the tRNA(Pro)-independent hydrolysis of activated Ala-AMP. The other activity is designated 'posttransfer' editing and involves deacylation of mischarged Ala-tRNA(Pro). The misacylated Cys-tRNA(Pro) is not edited by ProRS. This chain is Proline--tRNA ligase, found in Xanthomonas campestris pv. campestris (strain 8004).